Consider the following 179-residue polypeptide: Replication restart protein DnaT (179 aa).

The interval 156-179 (GGLPKRDVNTVSEPDSQIPPGFRG) is disordered.

This sequence belongs to the DnaT family. In terms of assembly, homooligomerizes. Interacts with PriB. Component of the replication restart primosome. Primosome assembly occurs via a 'hand-off' mechanism. PriA binds to replication forks, subsequently PriB then DnaT bind; DnaT then displaces ssDNA to generate the helicase loading substrate.

Functionally, involved in the restart of stalled replication forks, which reloads the replicative helicase on sites other than the origin of replication. Can function in multiple replication restart pathways. Displaces ssDNA from a PriB-ssDNA complex. Probably forms a spiral filament on ssDNA. This Escherichia coli O157:H7 protein is Replication restart protein DnaT.